Here is a 445-residue protein sequence, read N- to C-terminus: Allantoinase (445 aa).

Residues H63, H65, K150, H186, H238, and D311 each contribute to the Zn(2+) site. Residue K150 is modified to N6-carboxylysine.

This sequence belongs to the metallo-dependent hydrolases superfamily. Allantoinase family. Homotetramer. It depends on Zn(2+) as a cofactor. Carboxylation allows a single lysine to coordinate two zinc ions.

The enzyme catalyses (S)-allantoin + H2O = allantoate + H(+). The protein operates within nitrogen metabolism; (S)-allantoin degradation; allantoate from (S)-allantoin: step 1/1. Its function is as follows. Catalyzes the conversion of allantoin (5-ureidohydantoin) to allantoic acid by hydrolytic cleavage of the five-member hydantoin ring. The polypeptide is Allantoinase (Streptomyces avermitilis (strain ATCC 31267 / DSM 46492 / JCM 5070 / NBRC 14893 / NCIMB 12804 / NRRL 8165 / MA-4680)).